The sequence spans 1547 residues: DNA topoisomerase 2 (1547 aa).

The disordered stretch occupies residues 8–30 (FNKMSSPKQNGTGEPAPAKGQKG). Positions 9 to 19 (NKMSSPKQNGT) are enriched in polar residues. Residues N99, N128, 156–158 (SSN), and 169–176 (GRNGYGAK) contribute to the ATP site. Residues 351–353 (KKK) are interaction with DNA. Residue 385–387 (QTK) participates in ATP binding. A Toprim domain is found at 463–580 (CTLILTEGDS…ELLKLPFLEE (118 aa)). Positions 469, 549, and 551 each coordinate Mg(2+). Residues 723–1192 (IPSMIDGLKP…TAPMLWREDL (470 aa)) form the Topo IIA-type catalytic domain. The O-(5'-phospho-DNA)-tyrosine intermediate role is filled by Y813. The interval 996 to 1005 (KLQTTISMTC) is interaction with DNA. 4 disordered regions span residues 1107–1134 (TALEDDDAQESEEEEPEPDPKGKPVDPD), 1209–1249 (EELN…ISDD), 1261–1423 (KTRK…MDSD), and 1459–1547 (RQRR…SLSD). The segment covering 1109-1123 (LEDDDAQESEEEEPE) has biased composition (acidic residues). Over residues 1124 to 1134 (PDPKGKPVDPD) the composition is skewed to basic and acidic residues. Over residues 1216–1228 (KTSKAMAGKKNRK) the composition is skewed to basic residues. Composition is skewed to basic and acidic residues over residues 1238–1249 (NGRRVEPKISDD) and 1294–1315 (EKPEKAEKPDKVDKAEKTDGLK). Residues 1331 to 1344 (TFSGSSSGEMSASD) are compositionally biased toward low complexity. The segment covering 1373–1383 (DDSGSDSEPEL) has biased composition (acidic residues). Composition is skewed to basic and acidic residues over residues 1384-1394 (LDNKIDSDHEA) and 1459-1488 (RQRRCDTSVPPKEKAAPKRKLMNVDKDEKK). A compositionally biased stretch (basic residues) spans 1513 to 1528 (KGKKKTAANPKKKAKK). Residues 1537 to 1547 (DFNISDSSLSD) are compositionally biased toward polar residues.

The protein belongs to the type II topoisomerase family. In terms of assembly, homodimer. The cofactor is Mg(2+). Mn(2+) serves as cofactor. It depends on Ca(2+) as a cofactor.

The protein localises to the nucleus. The catalysed reaction is ATP-dependent breakage, passage and rejoining of double-stranded DNA.. Functionally, control of topological states of DNA by transient breakage and subsequent rejoining of DNA strands. Topoisomerase II makes double-strand breaks. In Bombyx mori (Silk moth), this protein is DNA topoisomerase 2 (TOP2).